The primary structure comprises 205 residues: Ras-like protein 3 (205 aa).

Residue 16–23 (GGGGVGKS) coordinates GTP. An Effector region motif is present at residues 38–46 (YDPTIEDSY). GTP is bound by residues 63–67 (DTAGQ) and 122–125 (NKCD). Cys202 carries the post-translational modification Cysteine methyl ester. Residue Cys202 is the site of S-farnesyl cysteine attachment. Residues 203–205 (ILM) constitute a propeptide, removed in mature form.

It belongs to the small GTPase superfamily. Ras family.

Its subcellular location is the cell membrane. It catalyses the reaction GTP + H2O = GDP + phosphate + H(+). Alternates between an inactive form bound to GDP and an active form bound to GTP. Activated by a guanine nucleotide-exchange factor (GEF) and inactivated by a GTPase-activating protein (GAP). The sequence is that of Ras-like protein 3 (RAS3) from Mucor circinelloides f. lusitanicus (Mucor racemosus var. lusitanicus).